The sequence spans 322 residues: HPr kinase/phosphorylase (322 aa).

Active-site residues include His146 and Lys167. 161–168 (GDSGLGKS) contributes to the ATP binding site. Mg(2+) is bound at residue Ser168. Asp185 acts as the Proton acceptor; for phosphorylation activity. Proton donor; for dephosphorylation activity in catalysis. Residues 209–218 (LEVRGLGLLD) form an important for the catalytic mechanism of both phosphorylation and dephosphorylation region. Glu210 provides a ligand contact to Mg(2+). Arg250 is a catalytic residue. Residues 271–276 (QVAAGR) are important for the catalytic mechanism of dephosphorylation.

The protein belongs to the HPrK/P family. As to quaternary structure, homohexamer. It depends on Mg(2+) as a cofactor.

The catalysed reaction is [HPr protein]-L-serine + ATP = [HPr protein]-O-phospho-L-serine + ADP + H(+). The enzyme catalyses [HPr protein]-O-phospho-L-serine + phosphate + H(+) = [HPr protein]-L-serine + diphosphate. Its function is as follows. Catalyzes the ATP- as well as the pyrophosphate-dependent phosphorylation of a specific serine residue in HPr, a phosphocarrier protein of the phosphoenolpyruvate-dependent sugar phosphotransferase system (PTS). HprK/P also catalyzes the pyrophosphate-producing, inorganic phosphate-dependent dephosphorylation (phosphorolysis) of seryl-phosphorylated HPr (P-Ser-HPr). The chain is HPr kinase/phosphorylase from Burkholderia ambifaria (strain ATCC BAA-244 / DSM 16087 / CCUG 44356 / LMG 19182 / AMMD) (Burkholderia cepacia (strain AMMD)).